The chain runs to 239 residues: Phosphoribosylaminoimidazole-succinocarboxamide synthase (239 aa).

Belongs to the SAICAR synthetase family.

The catalysed reaction is 5-amino-1-(5-phospho-D-ribosyl)imidazole-4-carboxylate + L-aspartate + ATP = (2S)-2-[5-amino-1-(5-phospho-beta-D-ribosyl)imidazole-4-carboxamido]succinate + ADP + phosphate + 2 H(+). Its pathway is purine metabolism; IMP biosynthesis via de novo pathway; 5-amino-1-(5-phospho-D-ribosyl)imidazole-4-carboxamide from 5-amino-1-(5-phospho-D-ribosyl)imidazole-4-carboxylate: step 1/2. The sequence is that of Phosphoribosylaminoimidazole-succinocarboxamide synthase from Bacillus cytotoxicus (strain DSM 22905 / CIP 110041 / 391-98 / NVH 391-98).